We begin with the raw amino-acid sequence, 340 residues long: Phenylalanine--tRNA ligase alpha subunit (340 aa).

E255 is a binding site for Mg(2+).

The protein belongs to the class-II aminoacyl-tRNA synthetase family. Phe-tRNA synthetase alpha subunit type 1 subfamily. As to quaternary structure, tetramer of two alpha and two beta subunits. Mg(2+) is required as a cofactor.

Its subcellular location is the cytoplasm. The enzyme catalyses tRNA(Phe) + L-phenylalanine + ATP = L-phenylalanyl-tRNA(Phe) + AMP + diphosphate + H(+). This chain is Phenylalanine--tRNA ligase alpha subunit, found in Moorella thermoacetica (strain ATCC 39073 / JCM 9320).